Here is a 726-residue protein sequence, read N- to C-terminus: MKKKNLITAALPYVNNIPHLGNLVQVLSADAFARYSRMMGIETLYVCGTDEYGTATETKALIEKTTPEELCNKYHAIHKSIYEWFNIKFDIFGRTTNKYHKETVQDLFLKLDKNGYITEKENEQFFCQQDKMFLADRYVTGECPNCGNNTKGDQCENCSNLLVTNELLNPRCIICKNIPIIKKTKHLYIDLPKIKNELEHWIQQIDQNTNWNTNAIKITNAFLRDGLKERTITRDLKWGIPVPKKEYENKVFYVWFDAPIGYISITKEIIKDWESWWKNNEDTNLIQFIGKDNILFHTIMFPSIELGSQENWTMLNKLASSEYLNYENLKFSKSAGTGIFGNDVITTGIPSDVWRFYIYYNRPEKADFQFMWDDFMERINSELIGNFSNLINRVLTFYKKFFGDKIDKIELNENFWQIVNIKYERTINFFKQIELKAALKEILDISRIGNKIFQDKEPWKTKNSTPQTTKELLLNLIYLIRDLSILISPFMPHTSDRIRSFFGKSYEISNKFLGTNLGLTTIQSTEVLFTKIEKQLIDSLKLKYSGRTNMQDEQNKNSINLFSEQICLKTVKIKTIDRNPDAEKLFILKLDDGTPEGKQIVSSIADHYTEEELIGKHIIIVDNLKPAKFRGIRSEGMLIATEDENKNFKIIIVEDFKDNPIPGERVILESDTGKELKSPTKINIDKFLQAQIVAENGELKINGINLILEHSKEKVLSKEIPNGKIY.

Residues 12-22 (PYVNNIPHLGN) carry the 'HIGH' region motif. 4 residues coordinate Zn(2+): Cys143, Cys146, Cys155, and Cys158. The 'KMSKS' region motif lies at 330-334 (KFSKS). ATP is bound at residue Lys333. Residues 562–667 (FSEQICLKTV…DNPIPGERVI (106 aa)) enclose the tRNA-binding domain.

Belongs to the class-I aminoacyl-tRNA synthetase family. MetG type 1 subfamily. In terms of assembly, homodimer. Zn(2+) is required as a cofactor.

The protein localises to the cytoplasm. It carries out the reaction tRNA(Met) + L-methionine + ATP = L-methionyl-tRNA(Met) + AMP + diphosphate. Functionally, is required not only for elongation of protein synthesis but also for the initiation of all mRNA translation through initiator tRNA(fMet) aminoacylation. The protein is Methionine--tRNA ligase of Borrelia duttonii (strain Ly).